The following is a 252-amino-acid chain: Cell division protein ZapD (252 aa).

Belongs to the ZapD family. As to quaternary structure, interacts with FtsZ.

The protein localises to the cytoplasm. Cell division factor that enhances FtsZ-ring assembly. Directly interacts with FtsZ and promotes bundling of FtsZ protofilaments, with a reduction in FtsZ GTPase activity. This chain is Cell division protein ZapD, found in Cupriavidus necator (strain ATCC 17699 / DSM 428 / KCTC 22496 / NCIMB 10442 / H16 / Stanier 337) (Ralstonia eutropha).